Consider the following 427-residue polypeptide: 4-hydroxy-3-methylbut-2-en-1-yl diphosphate synthase (flavodoxin) (427 aa).

Residues methionine 1–threonine 21 are disordered. 4 residues coordinate [4Fe-4S] cluster: cysteine 310, cysteine 313, cysteine 356, and glutamate 363.

It belongs to the IspG family. [4Fe-4S] cluster serves as cofactor.

The catalysed reaction is (2E)-4-hydroxy-3-methylbut-2-enyl diphosphate + oxidized [flavodoxin] + H2O + 2 H(+) = 2-C-methyl-D-erythritol 2,4-cyclic diphosphate + reduced [flavodoxin]. Its pathway is isoprenoid biosynthesis; isopentenyl diphosphate biosynthesis via DXP pathway; isopentenyl diphosphate from 1-deoxy-D-xylulose 5-phosphate: step 5/6. In terms of biological role, converts 2C-methyl-D-erythritol 2,4-cyclodiphosphate (ME-2,4cPP) into 1-hydroxy-2-methyl-2-(E)-butenyl 4-diphosphate. The sequence is that of 4-hydroxy-3-methylbut-2-en-1-yl diphosphate synthase (flavodoxin) from Bradyrhizobium diazoefficiens (strain JCM 10833 / BCRC 13528 / IAM 13628 / NBRC 14792 / USDA 110).